Here is a 147-residue protein sequence, read N- to C-terminus: Large ribosomal subunit protein bL9 (147 aa).

It belongs to the bacterial ribosomal protein bL9 family.

Its function is as follows. Binds to the 23S rRNA. In Clostridium botulinum (strain 657 / Type Ba4), this protein is Large ribosomal subunit protein bL9.